The primary structure comprises 156 residues: Phosphopantetheine adenylyltransferase (156 aa).

Position 10 (T10) interacts with substrate. Residues 10 to 11 and H18 contribute to the ATP site; that span reads TF. K42, L74, and R88 together coordinate substrate. ATP is bound by residues 89–91, E99, and 124–130; these read GLR and NAFISSS.

It belongs to the bacterial CoaD family. In terms of assembly, homohexamer. Mg(2+) serves as cofactor.

The protein localises to the cytoplasm. It catalyses the reaction (R)-4'-phosphopantetheine + ATP + H(+) = 3'-dephospho-CoA + diphosphate. It participates in cofactor biosynthesis; coenzyme A biosynthesis; CoA from (R)-pantothenate: step 4/5. Functionally, reversibly transfers an adenylyl group from ATP to 4'-phosphopantetheine, yielding dephospho-CoA (dPCoA) and pyrophosphate. This is Phosphopantetheine adenylyltransferase from Campylobacter curvus (strain 525.92).